Reading from the N-terminus, the 134-residue chain is Small ribosomal subunit protein uS8c (134 aa).

This sequence belongs to the universal ribosomal protein uS8 family. In terms of assembly, part of the 30S ribosomal subunit.

The protein localises to the plastid. It is found in the chloroplast. In terms of biological role, one of the primary rRNA binding proteins, it binds directly to 16S rRNA central domain where it helps coordinate assembly of the platform of the 30S subunit. In Cucumis sativus (Cucumber), this protein is Small ribosomal subunit protein uS8c (rps8).